A 615-amino-acid chain; its full sequence is Coagulation factor XII (615 aa).

The first 19 residues, 1–19, serve as a signal peptide directing secretion; sequence MRALLLLGFLLVSLESTLS. Positions 42 to 90 constitute a Fibronectin type-II domain; it reads VTGEPCHFPFQYHRQLYHKCTHKGRPGPQPWCATTPNFDQDQRWGYCLE. 13 disulfides stabilise this stretch: Cys47–Cys73, Cys61–Cys88, Cys98–Cys110, Cys104–Cys119, Cys121–Cys130, Cys135–Cys163, Cys161–Cys170, Cys178–Cys189, Cys183–Cys198, Cys200–Cys209, Cys217–Cys295, Cys238–Cys277, and Cys266–Cys290. The region spanning 94–131 is the EGF-like 1 domain; the sequence is VKDHCSKHSPCQKGGTCVNMPSGPHCLCPQHLTGNHCQ. A glycan (O-linked (Fuc) threonine) is linked at Thr109. Residues 133–173 enclose the Fibronectin type-I domain; that stretch reads EKCFEPQLLRFFHKNEIWYRTEQAAVARCQCKGPDAHCQRL. Positions 174–210 constitute an EGF-like 2 domain; it reads ASQACRTNPCLHGGRCLEVEGHRLCHCPVGYTGAFCD. Residues 217–295 form the Kringle domain; sequence CYDGRGLSYR…SWEYCDLAQC (79 aa). A glycan (N-linked (GlcNAc...) asparagine) is linked at Asn249. A disordered region spans residues 298-359; that stretch reads PTQAAPPTPV…SLTRNGPLSC (62 aa). O-linked (GalNAc...) threonine glycans are attached at residues Thr299 and Thr305. Residue Ser308 is glycosylated (O-linked (GalNAc...) serine). Positions 317–326 are enriched in pro residues; that stretch reads PAQPAPPKPQ. Over residues 327–338 the composition is skewed to low complexity; it reads PTTRTPPQSQTP. Residues Thr328, Thr329, and Thr337 are each glycosylated (O-linked (GalNAc...) threonine). 7 disulfides stabilise this stretch: Cys359/Cys486, Cys397/Cys413, Cys405/Cys475, Cys436/Cys439, Cys500/Cys569, Cys532/Cys548, and Cys559/Cys590. Positions 373–614 constitute a Peptidase S1 domain; sequence VVGGLVALRG…YLAWIREHTV (242 aa). His412 acts as the Charge relay system in catalysis. The N-linked (GlcNAc...) asparagine glycan is linked to Asn433. Catalysis depends on Asp461, which acts as the Charge relay system. The active-site Charge relay system is the Ser563.

Belongs to the peptidase S1 family. In terms of assembly, interacts with HRG; the interaction, which is enhanced in the presence of zinc ions and inhibited by heparin-binding, inhibits factor XII autoactivation and contact-initiated coagulation. Interacts (inactive and activated) with D7L2, an anticoagulant protein from Anopheles gambiae. Interacts (activated) with iripin-8, a serine protease inhibitor from Ixodes ricinus saliva. Interacts (inactive and activated) (via amino acids 1-77) with triafestin-1 and triafestin-2, anticoagulant proteins from Triatoma infestans. Interacts (inactive and activated) (via amino acids 1-77) with short form salivary protein D7R1, an anticoagulant protein from Anopheles stephensi. Interacts (inactive and activated) (via fibronectin type II domain) with haemaphysalin, an anticoagulant protein from Haemaphysalis longicornis. Post-translationally, factor XII is activated by kallikrein in alpha-factor XIIa, which is further converted by trypsin into beta-factor XIIa. Alpha-factor XIIa is composed of an NH2-terminal heavy chain, called coagulation factor XIIa heavy chain, and a COOH-terminal light chain, called coagulation factor XIIa light chain, connected by a disulfide bond. Beta-factor XIIa is composed of 2 chains linked by a disulfide bond, an N-terminal nonapeptide, called beta-factor XIIa part 1, and coagulation factor XIIa light chain, also known in this context as beta-factor XIIa part 2. O- and N-glycosylated. The O-linked polysaccharides were not identified, but are probably the mucin type linked to GalNAc.

The protein localises to the secreted. The enzyme catalyses Selective cleavage of Arg-|-Ile bonds in factor VII to form factor VIIa and factor XI to form factor XIa.. With respect to regulation, activity is promoted in the presence of negatively charged surfaces. In terms of biological role, factor XII is a serum glycoprotein that participates in the initiation of blood coagulation, fibrinolysis, and the generation of bradykinin and angiotensin. Prekallikrein is cleaved by factor XII to form kallikrein, which then cleaves factor XII first to alpha-factor XIIa and then trypsin cleaves it to beta-factor XIIa. Alpha-factor XIIa activates factor XI to factor XIa. In Homo sapiens (Human), this protein is Coagulation factor XII (F12).